A 309-amino-acid polypeptide reads, in one-letter code: Porphobilinogen deaminase (309 aa).

At cysteine 242 the chain carries S-(dipyrrolylmethanemethyl)cysteine.

Belongs to the HMBS family. As to quaternary structure, monomer. Dipyrromethane serves as cofactor.

It catalyses the reaction 4 porphobilinogen + H2O = hydroxymethylbilane + 4 NH4(+). The protein operates within porphyrin-containing compound metabolism; protoporphyrin-IX biosynthesis; coproporphyrinogen-III from 5-aminolevulinate: step 2/4. Its function is as follows. Tetrapolymerization of the monopyrrole PBG into the hydroxymethylbilane pre-uroporphyrinogen in several discrete steps. The chain is Porphobilinogen deaminase from Syntrophobacter fumaroxidans (strain DSM 10017 / MPOB).